We begin with the raw amino-acid sequence, 315 residues long: Acetaldehyde dehydrogenase 2 (315 aa).

Residue 13–16 (SGNI) coordinates NAD(+). Cysteine 131 acts as the Acyl-thioester intermediate in catalysis. NAD(+) contacts are provided by residues 162 to 170 (SAGPGTRAN) and asparagine 290.

Belongs to the acetaldehyde dehydrogenase family.

The catalysed reaction is acetaldehyde + NAD(+) + CoA = acetyl-CoA + NADH + H(+). The sequence is that of Acetaldehyde dehydrogenase 2 from Pseudomonas putida (strain W619).